Here is a 246-residue protein sequence, read N- to C-terminus: ATP synthase subunit a (246 aa).

Residues 1 to 3 (MIY) constitute a propeptide, removed in mature form. 7 consecutive transmembrane segments (helical) span residues 25-45 (VNNY…SVFL), 51-71 (LGFN…LNMV), 79-99 (GGMY…ANLV), 112-132 (LVAI…MGLS), 138-158 (FFAL…LVLI), 178-198 (VLSG…LMGS), and 203-223 (FMGG…EFAI).

The protein belongs to the ATPase A chain family. F-type ATPases have 2 components, CF(1) - the catalytic core - and CF(0) - the membrane proton channel. CF(1) has five subunits: alpha(3), beta(3), gamma(1), delta(1), epsilon(1). CF(0) has three main subunits: a, b and c.

The protein resides in the mitochondrion inner membrane. Its function is as follows. Mitochondrial membrane ATP synthase (F(1)F(0) ATP synthase or Complex V) produces ATP from ADP in the presence of a proton gradient across the membrane which is generated by electron transport complexes of the respiratory chain. F-type ATPases consist of two structural domains, F(1) - containing the extramembraneous catalytic core and F(0) - containing the membrane proton channel, linked together by a central stalk and a peripheral stalk. During catalysis, ATP synthesis in the catalytic domain of F(1) is coupled via a rotary mechanism of the central stalk subunits to proton translocation. Key component of the proton channel; it may play a direct role in the translocation of protons across the membrane. This is ATP synthase subunit a (ATP6) from Debaryomyces hansenii (strain ATCC 36239 / CBS 767 / BCRC 21394 / JCM 1990 / NBRC 0083 / IGC 2968) (Yeast).